A 188-amino-acid polypeptide reads, in one-letter code: Elongation factor P (188 aa).

It belongs to the elongation factor P family.

The protein localises to the cytoplasm. It functions in the pathway protein biosynthesis; polypeptide chain elongation. Functionally, involved in peptide bond synthesis. Stimulates efficient translation and peptide-bond synthesis on native or reconstituted 70S ribosomes in vitro. Probably functions indirectly by altering the affinity of the ribosome for aminoacyl-tRNA, thus increasing their reactivity as acceptors for peptidyl transferase. This Rickettsia conorii (strain ATCC VR-613 / Malish 7) protein is Elongation factor P (efp).